The sequence spans 372 residues: Cyclin-dependent kinase 9 (372 aa).

One can recognise a Protein kinase domain in the interval 19–315; sequence YEKLAKIGQG…SDDALNHDFF (297 aa). 25–33 contributes to the ATP binding site; that stretch reads IGQGTFGEV. An N6-acetyllysine; by EP300/CBP, PCAF/KAT2B and GCN5/KAT2A modification is found at lysine 44. ATP-binding positions include lysine 48 and 104-106; that span reads DFC. N6-acetyllysine; by PCAF/KAT2B and GCN5/KAT2A is present on lysine 48. The Proton acceptor role is filled by aspartate 149. The T-loop stretch occupies residues 166–191; it reads ADFGLARAFSLAKNSQPNRYTNRVVT. Residue aspartate 167 coordinates ATP. A Phosphoserine modification is found at serine 175. At threonine 186 the chain carries Phosphothreonine; by CaMK1D. The segment at 343–372 is disordered; it reads RRKGSQITQQSTNQSRNPATTNQTEFERVF. Position 347 is a phosphoserine; by CDK9 and PKA (serine 347). Polar residues predominate over residues 347-366; it reads SQITQQSTNQSRNPATTNQT. Position 350 is a phosphothreonine; by CDK9 (threonine 350). A Phosphoserine; by CDK9 modification is found at serine 353. Phosphothreonine; by CDK9 is present on threonine 354. Serine 357 is modified (phosphoserine; by CDK9). Phosphothreonine; by CDK9 occurs at positions 362 and 363.

It belongs to the protein kinase superfamily. CMGC Ser/Thr protein kinase family. CDC2/CDKX subfamily. Component of the super elongation complex (SEC), at least composed of EAF1, EAF2, CDK9, MLLT3/AF9, AFF (AFF1 or AFF4), the P-TEFb complex and ELL (ELL, ELL2 or ELL3). Associates with CCNT1/cyclin-T1, CCNT2/cyclin-T2 (isoform A and isoform B) or CCNK/cyclin-K to form active P-TEFb. P-TEFb forms a complex with AFF4/AF5Q31 and is part of the super elongation complex (SEC). Component of a complex which is composed of at least 5 members: HTATSF1/Tat-SF1, P-TEFb complex, RNA pol II, SUPT5H, and NCL/nucleolin. Associates with UBR5 and forms a transcription regulatory complex composed of CDK9, RNAP II, UBR5 and TFIIS/TCEA1 that can stimulate target gene transcription (e.g. gamma fibrinogen/FGG) by recruiting their promoters. Component of the 7SK snRNP inactive complex which is composed of at least 8 members: P-TEFb (composed of CDK9 and CCNT1/cyclin-T1), HEXIM1, HEXIM2, LARP7, BCDIN3, SART3 proteins and 7SK and U6 snRNAs. This inactive 7SK snRNP complex can also interact with NCOR1 and HDAC3, probably to regulate CDK9 acetylation. Release of P-TEFb from P-TEFb/7SK snRNP complex requires both PP2B to transduce calcium Ca(2+) signaling in response to stimuli (e.g. UV or hexamethylene bisacetamide (HMBA)), and PPP1CA to dephosphorylate Thr-186. This released P-TEFb remains inactive in the pre-initiation complex with BRD4 until new Thr-186 phosphorylation occurs after the synthesis of a short RNA. Interacts with BRD4; to target chromatin binding. Interacts with JMJD6. Interacts with activated nuclear STAT3 and RELA/p65. Binds to AR and MYOD1. Forms a complex composed of CDK9, CCNT1/cyclin-T1, EP300 and GATA4 that stimulates hypertrophy in cardiomyocytes. The large PER complex involved in the repression of transcriptional termination is composed of at least PER2, CDK9, DDX5, DHX9, NCBP1 and POLR2A (active). Interacts with HSF1. Interacts with TBX21. Interacts with WDR43. Interacts with ZMYND8; the association appears to occur between homodimeric ZMYND8 and the activated form of the P-TEFb complex. In terms of processing, autophosphorylation at Thr-186, Ser-347, Thr-350, Ser-353, Thr-354 and Ser-357 triggers kinase activity by promoting cyclin and substrate binding upon conformational changes. Thr-186 phosphorylation requires the calcium Ca(2+) signaling pathway, including CaMK1D and calmodulin. This inhibition is relieved by Thr-29 dephosphorylation. Phosphorylation at Ser-175 inhibits kinase activity. Can be phosphorylated on either Thr-362 or Thr-363 but not on both simultaneously. Dephosphorylation of Thr-186 by PPM1A and PPM1B blocks CDK9 activity and may lead to CDK9 proteasomal degradation. However, PPP1CA-mediated Thr-186 dephosphorylation is required to release P-TEFb from its inactive P-TEFb/7SK snRNP complex. Dephosphorylated at Ser-347 by the PNUTS-PP1 complex during RNA polymerase II transcription pause-release. Dephosphorylation of C-terminus Thr and Ser residues by protein phosphatase-1 (PP1) triggers CDK9 activity. Post-translationally, N6-acetylation of Lys-44 promotes kinase activity, whereas acetylation of both Lys-44 and Lys-48 mediated by PCAF/KAT2B and GCN5/KAT2A reduces kinase activity. The acetylated form associates with PML bodies in the nuclear matrix and with the transcriptionally silent HIV-1 genome; deacetylated upon transcription stimulation. Deacetylated by SIRT7, promoting the kinase activity and subsequent 'Ser-2' phosphorylation of the C-terminal domain (CTD) of RNA polymerase II. In terms of processing, polyubiquitinated and thus activated by UBR5. This ubiquitination is promoted by TFIIS/TCEA1 and favors 'Ser-2' phosphorylation of RPB1/POLR2A CTD. As to expression, expressed at high levels in brain and kidney.

The protein localises to the nucleus. It localises to the cytoplasm. It is found in the PML body. The enzyme catalyses L-seryl-[protein] + ATP = O-phospho-L-seryl-[protein] + ADP + H(+). It catalyses the reaction L-threonyl-[protein] + ATP = O-phospho-L-threonyl-[protein] + ADP + H(+). The catalysed reaction is [DNA-directed RNA polymerase] + ATP = phospho-[DNA-directed RNA polymerase] + ADP + H(+). Activation by Thr-186 phosphorylation is calcium Ca(2+) signaling pathway-dependent; actively inactivated by dephosphorylation mediated by PPP1CA, PPM1A and PPM1B. Reversibly repressed by acetylation at Lys-44 and Lys-48. Protein kinase involved in the regulation of transcription. Member of the cyclin-dependent kinase pair (CDK9/cyclin-T) complex, also called positive transcription elongation factor b (P-TEFb), which facilitates the transition from abortive to productive elongation by phosphorylating the CTD (C-terminal domain) of the large subunit of RNA polymerase II (RNAP II) POLR2A, SUPT5H and RDBP. This complex is inactive when in the 7SK snRNP complex form. Phosphorylates EP300, MYOD1, RPB1/POLR2A and AR and the negative elongation factors DSIF and NELFE. Regulates cytokine inducible transcription networks by facilitating promoter recognition of target transcription factors (e.g. TNF-inducible RELA/p65 activation and IL-6-inducible STAT3 signaling). Promotes RNA synthesis in genetic programs for cell growth, differentiation and viral pathogenesis. P-TEFb is also involved in cotranscriptional histone modification, mRNA processing and mRNA export. Modulates a complex network of chromatin modifications including histone H2B monoubiquitination (H2Bub1), H3 lysine 4 trimethylation (H3K4me3) and H3K36me3; integrates phosphorylation during transcription with chromatin modifications to control co-transcriptional histone mRNA processing. The CDK9/cyclin-K complex has also a kinase activity towards CTD of RNAP II and can substitute for CDK9/cyclin-T P-TEFb in vitro. Replication stress response protein; the CDK9/cyclin-K complex is required for genome integrity maintenance, by promoting cell cycle recovery from replication arrest and limiting single-stranded DNA amount in response to replication stress, thus reducing the breakdown of stalled replication forks and avoiding DNA damage. In addition, probable function in DNA repair of isoform 2 via interaction with KU70/XRCC6. Promotes cardiac myocyte enlargement. RPB1/POLR2A phosphorylation on 'Ser-2' in CTD activates transcription. AR phosphorylation modulates AR transcription factor promoter selectivity and cell growth. DSIF and NELF phosphorylation promotes transcription by inhibiting their negative effect. The phosphorylation of MYOD1 enhances its transcriptional activity and thus promotes muscle differentiation. Catalyzes phosphorylation of KAT5, promoting KAT5 recruitment to chromatin and histone acetyltransferase activity. The protein is Cyclin-dependent kinase 9 (Cdk9) of Mus musculus (Mouse).